The following is a 218-amino-acid chain: Adenylate kinase (218 aa).

Residue 12 to 17 coordinates ATP; that stretch reads GAGKGT. The NMP stretch occupies residues 32-61; sequence STGDIFRKNISENTPLGIEAKSYMDNGQLV. AMP contacts are provided by residues Thr33, Arg38, 59-61, 87-90, and Gln94; these read QLV and GFPR. The tract at residues 128-165 is LID; it reads GRRVCPSCGASYHIKFNPPTNDGKCDLCGSDVIQRKDD. Arg129 is a binding site for ATP. Residues Cys132 and Cys135 each coordinate Zn(2+). 138-139 provides a ligand contact to ATP; sequence SY. 2 residues coordinate Zn(2+): Cys152 and Cys155. AMP contacts are provided by Arg162 and Arg173. Gln201 serves as a coordination point for ATP.

This sequence belongs to the adenylate kinase family. As to quaternary structure, monomer.

It is found in the cytoplasm. The catalysed reaction is AMP + ATP = 2 ADP. It participates in purine metabolism; AMP biosynthesis via salvage pathway; AMP from ADP: step 1/1. In terms of biological role, catalyzes the reversible transfer of the terminal phosphate group between ATP and AMP. Plays an important role in cellular energy homeostasis and in adenine nucleotide metabolism. The chain is Adenylate kinase from Clostridium perfringens (strain 13 / Type A).